A 286-amino-acid chain; its full sequence is Bifunctional protein FolD (286 aa).

Residues 167-169 and Ile233 each bind NADP(+); that span reads GRS.

Belongs to the tetrahydrofolate dehydrogenase/cyclohydrolase family. As to quaternary structure, homodimer.

It carries out the reaction (6R)-5,10-methylene-5,6,7,8-tetrahydrofolate + NADP(+) = (6R)-5,10-methenyltetrahydrofolate + NADPH. The catalysed reaction is (6R)-5,10-methenyltetrahydrofolate + H2O = (6R)-10-formyltetrahydrofolate + H(+). It functions in the pathway one-carbon metabolism; tetrahydrofolate interconversion. Its function is as follows. Catalyzes the oxidation of 5,10-methylenetetrahydrofolate to 5,10-methenyltetrahydrofolate and then the hydrolysis of 5,10-methenyltetrahydrofolate to 10-formyltetrahydrofolate. In Limosilactobacillus reuteri (strain DSM 20016) (Lactobacillus reuteri), this protein is Bifunctional protein FolD.